A 78-amino-acid chain; its full sequence is uncharacterized protein (78 aa).

The helical transmembrane segment at 13-33 (STILILLMSVLILLLSIDILA) threads the bilayer.

The protein localises to the membrane. This is an uncharacterized protein from Methanocaldococcus jannaschii (strain ATCC 43067 / DSM 2661 / JAL-1 / JCM 10045 / NBRC 100440) (Methanococcus jannaschii).